A 333-amino-acid chain; its full sequence is Glycerol-3-phosphate dehydrogenase [NAD(P)+] (333 aa).

Residues Trp-12, His-31, and Lys-105 each contribute to the NADPH site. 3 residues coordinate sn-glycerol 3-phosphate: Lys-105, Gly-134, and Ser-136. Ala-138 contacts NADPH. The sn-glycerol 3-phosphate site is built by Lys-189, Asp-242, Ser-252, Arg-253, and Asn-254. The active-site Proton acceptor is Lys-189. Residue Arg-253 coordinates NADPH. Val-278 and Glu-280 together coordinate NADPH.

Belongs to the NAD-dependent glycerol-3-phosphate dehydrogenase family.

Its subcellular location is the cytoplasm. The catalysed reaction is sn-glycerol 3-phosphate + NAD(+) = dihydroxyacetone phosphate + NADH + H(+). The enzyme catalyses sn-glycerol 3-phosphate + NADP(+) = dihydroxyacetone phosphate + NADPH + H(+). Its pathway is membrane lipid metabolism; glycerophospholipid metabolism. Functionally, catalyzes the reduction of the glycolytic intermediate dihydroxyacetone phosphate (DHAP) to sn-glycerol 3-phosphate (G3P), the key precursor for phospholipid synthesis. This chain is Glycerol-3-phosphate dehydrogenase [NAD(P)+], found in Brachyspira hyodysenteriae (strain ATCC 49526 / WA1).